The chain runs to 263 residues: Acyl-[acyl-carrier-protein]--UDP-N-acetylglucosamine O-acyltransferase (263 aa).

It belongs to the transferase hexapeptide repeat family. LpxA subfamily. In terms of assembly, homotrimer.

It localises to the cytoplasm. The catalysed reaction is a (3R)-hydroxyacyl-[ACP] + UDP-N-acetyl-alpha-D-glucosamine = a UDP-3-O-[(3R)-3-hydroxyacyl]-N-acetyl-alpha-D-glucosamine + holo-[ACP]. Its pathway is glycolipid biosynthesis; lipid IV(A) biosynthesis; lipid IV(A) from (3R)-3-hydroxytetradecanoyl-[acyl-carrier-protein] and UDP-N-acetyl-alpha-D-glucosamine: step 1/6. In terms of biological role, involved in the biosynthesis of lipid A, a phosphorylated glycolipid that anchors the lipopolysaccharide to the outer membrane of the cell. This chain is Acyl-[acyl-carrier-protein]--UDP-N-acetylglucosamine O-acyltransferase, found in Xanthomonas campestris pv. campestris (strain 8004).